We begin with the raw amino-acid sequence, 270 residues long: Putative pyruvate, phosphate dikinase regulatory protein (270 aa).

149–156 serves as a coordination point for ADP; sequence GVSRTSKT.

This sequence belongs to the pyruvate, phosphate/water dikinase regulatory protein family. PDRP subfamily.

The enzyme catalyses N(tele)-phospho-L-histidyl/L-threonyl-[pyruvate, phosphate dikinase] + ADP = N(tele)-phospho-L-histidyl/O-phospho-L-threonyl-[pyruvate, phosphate dikinase] + AMP + H(+). The catalysed reaction is N(tele)-phospho-L-histidyl/O-phospho-L-threonyl-[pyruvate, phosphate dikinase] + phosphate + H(+) = N(tele)-phospho-L-histidyl/L-threonyl-[pyruvate, phosphate dikinase] + diphosphate. Bifunctional serine/threonine kinase and phosphorylase involved in the regulation of the pyruvate, phosphate dikinase (PPDK) by catalyzing its phosphorylation/dephosphorylation. In Sphingopyxis alaskensis (strain DSM 13593 / LMG 18877 / RB2256) (Sphingomonas alaskensis), this protein is Putative pyruvate, phosphate dikinase regulatory protein.